Consider the following 215-residue polypeptide: Ribosomal RNA small subunit methyltransferase G (215 aa).

S-adenosyl-L-methionine contacts are provided by residues Gly78, Leu83, 128 to 129 (AE), and Arg146.

This sequence belongs to the methyltransferase superfamily. RNA methyltransferase RsmG family.

It localises to the cytoplasm. It catalyses the reaction guanosine(527) in 16S rRNA + S-adenosyl-L-methionine = N(7)-methylguanosine(527) in 16S rRNA + S-adenosyl-L-homocysteine. Its function is as follows. Specifically methylates the N7 position of guanine in position 527 of 16S rRNA. This is Ribosomal RNA small subunit methyltransferase G from Anaeromyxobacter dehalogenans (strain 2CP-1 / ATCC BAA-258).